The primary structure comprises 479 residues: Poly(A) polymerase catalytic subunit (479 aa).

Catalysis depends on residues aspartate 202 and aspartate 204. Residues aspartate 202, aspartate 204, and aspartate 253 each coordinate Ca(2+).

It belongs to the poxviridae poly(A) polymerase catalytic subunit family. Heterodimer of a large (catalytic) subunit and a small (regulatory) subunit.

The catalysed reaction is RNA(n) + ATP = RNA(n)-3'-adenine ribonucleotide + diphosphate. Functionally, polymerase that creates the 3'-poly(A) tail of mRNA's. This Bos taurus (Bovine) protein is Poly(A) polymerase catalytic subunit (OPG063).